Consider the following 312-residue polypeptide: Chitin deacetylase 2 (312 aa).

The first 44 residues, 1 to 44 (MRIQLNTIDLQCIIALSCLGQFVHAEANREDLKQIDFQFPVLER), serve as a signal peptide directing secretion. A disulfide bond links Cys117 and Cys300. One can recognise a NodB homology domain in the interval 118 to 307 (SKLSQTFDDG…SHCVGGIDYI (190 aa)). Asp125 (proton acceptor) is an active-site residue. Acetate is bound at residue Asp125. A Co(2+)-binding site is contributed by Asp126. A glycan (N-linked (GlcNAc...) asparagine) is linked at Asn142. The Co(2+) site is built by His172 and His176. N-linked (GlcNAc...) asparagine glycans are attached at residues Asn181 and Asn199. Tyr213 lines the acetate pocket. N-linked (GlcNAc...) asparagine glycans are attached at residues Asn246 and Asn263. The active-site Proton donor is His273.

It belongs to the polysaccharide deacetylase family. As to quaternary structure, monomer. Requires Co(2+) as cofactor. In terms of processing, N-glycosylated.

The protein localises to the prospore. The enzyme catalyses [(1-&gt;4)-N-acetyl-beta-D-glucosaminyl](n) + n H2O = chitosan + n acetate. Hydrolyzes the N-acetamido groups of N-acetyl-D-glucosamine residues in chitin to form chitosan and acetate. Chitosan is a component of the spore wall. This is Chitin deacetylase 2 from Saccharomyces cerevisiae (strain ATCC 204508 / S288c) (Baker's yeast).